Reading from the N-terminus, the 1233-residue chain is Structural maintenance of chromosomes protein 1A (1233 aa).

32-39 (GPNGSGKS) contacts ATP. Coiled-coil stretches lie at residues 104 to 124 (EYKI…LEKL) and 163 to 503 (ELAQ…KAEI). Residues 284 to 293 (IKEKDSELNQ) show a composition bias toward basic and acidic residues. Disordered stretches follow at residues 284 to 308 (IKEK…TSHK) and 348 to 369 (QEFE…TLEE). Serine 358 and serine 360 each carry phosphoserine. The region spanning 515 to 629 (VYGRLIDLCQ…DNVEDARRIA (115 aa)) is the SMC hinge domain. N6-acetyllysine occurs at positions 648 and 713. Positions 660–935 (KAKARRWDEK…RHNLLQACKM (276 aa)) form a coiled coil. Residues 947–968 (MDDISQEEGSSQGEDSVSGSQR) form a disordered region. Positions 953–967 (EEGSSQGEDSVSGSQ) are enriched in low complexity. Residues serine 957, serine 962, serine 966, and serine 970 each carry the phosphoserine modification. A coiled-coil region spans residues 991-1068 (KDAQAEEEIK…FEQIKKERFD (78 aa)). Lysine 1037 is subject to N6-acetyllysine.

It belongs to the SMC family. SMC1 subfamily. Forms a heterodimer with SMC3 in cohesin complexes. Cohesin complexes are composed of the SMC1 (SMC1A or meiosis-specific SMC1B) and SMC3 heterodimer attached via their SMC hinge domain, RAD21 which link them, and one STAG protein (STAG1, STAG2 or meiosis-specific STAG3), which interacts with RAD21. In germ cell cohesin complexes, SMC1A is mutually exclusive with SMC1B. Found in a complex with CDCA5, SMC3 and RAD21, PDS5A/SCC-112 and PDS5B/APRIN. Interacts with NDC80, SYCP2, STAG3, BRCA1 and BRAT1. The cohesin complex interacts with the cohesin loading complex subunits NIPBL/Scc2 (via HEAT repeats) and MAU2/Scc4. NIPBL directly contacts all members of the complex, RAD21, SMC1A/B, SMC3 and STAG1. Interacts with RPGR. Found in a complex containing POLE and SMC3. Post-translationally, phosphorylated upon ionizing radiation or DNA methylation. Phosphorylation of Ser-957 and Ser-966 activates it and is required for S-phase checkpoint activation. In terms of processing, ubiquitinated by the DCX(DCAF15) complex, leading to its degradation.

Its subcellular location is the nucleus. The protein resides in the chromosome. The protein localises to the centromere. Its function is as follows. Involved in chromosome cohesion during cell cycle and in DNA repair. Involved in DNA repair via its interaction with BRCA1 and its related phosphorylation by ATM, and works as a downstream effector in the ATM/NBS1 branch of S-phase checkpoint. Central component of cohesin complex. The cohesin complex is required for the cohesion of sister chromatids after DNA replication. The cohesin complex apparently forms a large proteinaceous ring within which sister chromatids can be trapped. At anaphase, the complex is cleaved and dissociates from chromatin, allowing sister chromatids to segregate. The cohesin complex may also play a role in spindle pole assembly during mitosis. Involved in DNA repair via its interaction with BRCA1 and its related phosphorylation by ATM, or via its phosphorylation by ATR. Works as a downstream effector both in the ATM/NBS1 branch and in the ATR/MSH2 branch of S-phase checkpoint. The sequence is that of Structural maintenance of chromosomes protein 1A (SMC1A) from Bos taurus (Bovine).